The sequence spans 472 residues: Eukaryotic translation initiation factor 2 subunit 3, X-linked (472 aa).

Position 2 is an N-acetylalanine (alanine 2). At serine 16 the chain carries Phosphoserine. A tr-type G domain is found at 39-248; sequence QATINIGTIG…IVKKIPVPPR (210 aa). Residues 48–55 form a G1 region; it reads GHVAHGKS. 51-56 lines the GTP pocket; sequence AHGKST. The interval 76–80 is G2; it reads NITIK. Residues 134-137 form a G3 region; that stretch reads DCPG. GTP is bound by residues 190-193 and 225-227; these read NKID and SAQ. The tract at residues 190 to 193 is G4; it reads NKID. The segment at 225–227 is G5; the sequence is SAQ. The segment at 457–469 is interacts with Cdc123; it reads GQIRRGVTIKPTV.

The protein belongs to the TRAFAC class translation factor GTPase superfamily. Classic translation factor GTPase family. EIF2G subfamily. Eukaryotic translation initiation factor 2 eIF2 is a heterotrimeric complex composed of an alpha (EIF2S1), a beta (EIF2S2) and a gamma (EIF2S3) chain. eIF2 is member of the 43S pre-initiation complex (43S PIC). Interacts (via C-terminus) with CDC123; the interaction is direct. Widely expressed.

The protein localises to the cytoplasm. It localises to the cytosol. It catalyses the reaction GTP + H2O = GDP + phosphate + H(+). Its function is as follows. Member of the eIF2 complex that functions in the early steps of protein synthesis by forming a ternary complex with GTP and initiator tRNA. This complex binds to a 40S ribosomal subunit, followed by mRNA binding to form the 43S pre-initiation complex (43S PIC). Junction of the 60S ribosomal subunit to form the 80S initiation complex is preceded by hydrolysis of the GTP bound to eIF2 and release of an eIF2-GDP binary complex. In order for eIF2 to recycle and catalyze another round of initiation, the GDP bound to eIF2 must exchange with GTP by way of a reaction catalyzed by eIF-2B. Along with its paralog on chromosome Y, may contribute to spermatogenesis up to the round spermatid stage. In Rattus norvegicus (Rat), this protein is Eukaryotic translation initiation factor 2 subunit 3, X-linked (Eif2s3).